Reading from the N-terminus, the 143-residue chain is Ribosome-binding factor A (143 aa).

Positions 117–143 (DAEIARRSQGAMPAGEADPYRHSDEEE) are disordered. Residues 134–143 (DPYRHSDEEE) are compositionally biased toward basic and acidic residues.

This sequence belongs to the RbfA family. In terms of assembly, monomer. Binds 30S ribosomal subunits, but not 50S ribosomal subunits or 70S ribosomes.

Its subcellular location is the cytoplasm. In terms of biological role, one of several proteins that assist in the late maturation steps of the functional core of the 30S ribosomal subunit. Associates with free 30S ribosomal subunits (but not with 30S subunits that are part of 70S ribosomes or polysomes). Required for efficient processing of 16S rRNA. May interact with the 5'-terminal helix region of 16S rRNA. The chain is Ribosome-binding factor A from Cutibacterium acnes (strain DSM 16379 / KPA171202) (Propionibacterium acnes).